The chain runs to 485 residues: Iroquois-class homeodomain protein IRX-4 (485 aa).

Positions 142-203 (GTRRKNATRE…NARRRLKKEN (62 aa)) form a DNA-binding region, homeobox; TALE-type. The interval 206–313 (TWPPRNKCSD…EEEEAAERAR (108 aa)) is disordered. Positions 221 to 232 (EEEEEEEEECSQ) are enriched in acidic residues. Positions 234–253 (DAMKSEKAEEPTGKEEKELE) are enriched in basic and acidic residues. Residues 254–269 (LSDLEDLDAAESESSE) show a composition bias toward acidic residues. The span at 282–294 (HPLPGGGPPPRAA) shows a compositional bias: pro residues.

The protein belongs to the TALE/IRO homeobox family. Ventricles of the heart, developing feather buds, retina, hindbrain.

Its subcellular location is the nucleus. Regulates the chamber-specific expression of myosin isoforms by activating the expression of the ventricle myosin heavy chain-1 (Vmhc1) and suppressing the expression of the atrial myosin heavy chain-1 (Amhc1) in the ventricles. May play a critical role in establishing chamber-specific gene expression in the developing heart. In Gallus gallus (Chicken), this protein is Iroquois-class homeodomain protein IRX-4 (IRX4).